Reading from the N-terminus, the 214-residue chain is UPF0502 protein Acid345_3645 (214 aa).

The protein belongs to the UPF0502 family.

The protein is UPF0502 protein Acid345_3645 of Koribacter versatilis (strain Ellin345).